A 328-amino-acid polypeptide reads, in one-letter code: Putative potassium channel protein YugO (328 aa).

The next 3 helical transmembrane spans lie at 19-39, 42-62, and 73-93; these read IGVIILCLILLFGQIIYILEP, FTSVFEGIWWAVVTVSTVGYG, and AAGILLILSGASFVTAYFATL. Residues 114–238 enclose the RCK N-terminal domain; the sequence is RDHIILIGWN…ERAGANQIIG (125 aa).

The protein resides in the cell membrane. This is Putative potassium channel protein YugO (yugO) from Bacillus subtilis (strain 168).